A 322-amino-acid chain; its full sequence is MSELFWFEKYRPRSFDEVVDLEEVKARLREFVRGGNMPHLLFYGPPGTGKTTMALVLARELYGEYWRENTLELNASDERGINVIRERVKEFARTAPVGKAPFKLVILDEADNMTSDAQQALRRIMEMYAQNTRFILLANYISGIIEPIQSRTVMIRFSPLPKEAVFARLRYIADNEGVKISDDALEAIYEFTQGDMRRAINALQIAATTGKEITEETVAKALGMVSPRLLRETLNDAFRGNFGKAATQIYGFVVDGGIGELEIVKQLHREALKLDVPEYLKPEIAYIIAEAHYAILRGAHGLTQIYGALAKIRKLLKYTASI.

Position 44–51 (44–51) interacts with ATP; sequence GPPGTGKT.

Belongs to the activator 1 small subunits family. RfcS subfamily. Heteromultimer composed of small subunits (RfcS) and large subunits (RfcL).

Functionally, part of the RFC clamp loader complex which loads the PCNA sliding clamp onto DNA. The chain is Replication factor C small subunit 2 from Pyrobaculum arsenaticum (strain DSM 13514 / JCM 11321 / PZ6).